A 294-amino-acid polypeptide reads, in one-letter code: Protoheme IX farnesyltransferase (294 aa).

A run of 9 helical transmembrane segments spans residues 8–28 (LTKP…FLIA), 35–55 (YSLF…GCVL), 81–101 (IFLN…FLFL), 107–127 (VLTI…YSLW), 133–153 (IYSI…GYCA), 163–183 (LMLL…IAIL), 209–226 (MVVY…FTVM), 230–252 (SYIF…FYGY), and 266–286 (FLLS…DHIL).

Belongs to the UbiA prenyltransferase family. Protoheme IX farnesyltransferase subfamily.

The protein resides in the cell inner membrane. It catalyses the reaction heme b + (2E,6E)-farnesyl diphosphate + H2O = Fe(II)-heme o + diphosphate. It functions in the pathway porphyrin-containing compound metabolism; heme O biosynthesis; heme O from protoheme: step 1/1. In terms of biological role, converts heme B (protoheme IX) to heme O by substitution of the vinyl group on carbon 2 of heme B porphyrin ring with a hydroxyethyl farnesyl side group. The protein is Protoheme IX farnesyltransferase of Blochmanniella pennsylvanica (strain BPEN).